Consider the following 234-residue polypeptide: UPF0502 protein Bphy_5360 (234 aa).

This sequence belongs to the UPF0502 family.

The protein is UPF0502 protein Bphy_5360 of Paraburkholderia phymatum (strain DSM 17167 / CIP 108236 / LMG 21445 / STM815) (Burkholderia phymatum).